The sequence spans 1345 residues: MPCPSQSSDELEFFVNGKKVTEKNVDPEVTLLAFLRKNLRLTGTKYACGTGSCGACTVMVSQHDPVCKKTRHFSVMACLVPLCSLHGAAVTTVEGVGSIKTRLHPVQERLAKSHGTQCGFCSPGMVMSMYALLRNHPQPSEEQLLEALGGNLCRCTGYRPILESGRTFCMESDGCLQKGTGQCCLDQKEGDSSGSKSDICTELFVKDEFQPLDPTQELIFPPELLRMAENPEKQTLTFYGERITWIAPGTLQELLVLKAKYPEAPLISGNTALGPAMKSQGHFYPVLLSPARIPDLRMVTKTSGGLTIGACCSLAQVKDVLAESISELPEEKTQTYRALLKHLRSLAGQQIRNMASLGGHVISRHYYSDLNPILSVGNATLNLLSEEGLRQIPLNGHFLAGLANEDLKPEEILGSVYIPHSQKREFVSAFRQAQCHQNALPDVNAGMRVLFKEGTDIIEELSIAYGGVGPTTVSAHRSCQQLLGRRWNALLLDEACRLLLDEVSLPGSAVGGKVEFRRTLIVSFFFKFYLEVLQELKADKRLLPESTDSQRYPEIADGSRSSLGDFQVTLPQGVQTYQRVNSHQPLQDPVGRPIMHLSGLKHATGEAVFCDDIPRVDKELFMALVTSTRAHARIISIDSSEVLDLPGVVDVITAEDIPGNNGEEDDKLLAVDKVLCVGQVVCAVVAETDVQAKRATKKIKITYEDLKPVLFTIEDAIQHNSFLCPEKKLEQGNMEEAFENVDQIVEGKVHVGGQEHFYMETQRVLVIPKTEDKELDMYVSTQDPAHVQKTVSSALNIPLSRITCHVKRVGGGFGGKVGRPAVFGAIAAVGAVKTGRPIRLVLDREDDMLITGGRHPLFAKYKVGFMNSGRIKALDIECYINGGCTLDDSELVTEFLVLKLENAYKIRNLRLRGRACMTNLPSNTAFRGFGFPQGALVTESCITAVAAKCGLPPEKIREKNMYKTVDKTIYKQAFNPEPLIRCWNECLDKSSFAIRRTRVDEFNKKSYWRKRGIAVVPMKFSVGFAATSYHQAAALVHIYTDGSVLVAHGGNELGQGIHTKMLQVASRELKIPMSYLHTSETCTAAVPNTIATAASVGADVNGRAVQNACQILLKRLEPVIKKNPEGTWRDWIEAAFEQRISLSATGYNRGYKAFMDWEKGEGDPFPYYVYGAACSEVEIDCLTGAHKKMRTDIVMDACCSLNPAIDVGQIEGAFIQGMGLYTTEDVHYSPEGVLYSRSPDKYKIPTVTDVPEQFNVSLLPSSQTPLTIYSSKGLGESGMFLGSSVFFAIADAVAAARRQRDIAEDFTVKSPATPERVRMACADRFTDMIPRDDPKTFKPWSIPIA.

The 2Fe-2S ferredoxin-type domain maps to 9–96 (DELEFFVNGK…GAAVTTVEGV (88 aa)). Cysteine 48, cysteine 53, cysteine 56, and cysteine 78 together coordinate [2Fe-2S] cluster. Glutamine 117 lines the Mo-molybdopterin pocket. [2Fe-2S] cluster is bound by residues cysteine 118, cysteine 121, cysteine 153, and cysteine 155. Cysteine 155 lines the Mo-molybdopterin pocket. Residues 238 to 423 (FYGERITWIA…GSVYIPHSQK (186 aa)) form the FAD-binding PCMH-type domain. Residues 266 to 273 (LISGNTAL), alanine 347, serine 356, histidine 360, aspartate 369, and leucine 413 each bind FAD. Mo-molybdopterin-binding positions include 812–813 (GF), 1094–1097 (ASVG), glutamine 1209, and leucine 1274. The Proton acceptor; for azaheterocycle hydroxylase activity role is filled by glutamate 1276.

This sequence belongs to the xanthine dehydrogenase family. Homodimer. It depends on [2Fe-2S] cluster as a cofactor. The cofactor is FAD. Requires Mo-molybdopterin as cofactor.

Its subcellular location is the cytoplasm. It carries out the reaction an aldehyde + O2 + H2O = a carboxylate + H2O2 + H(+). In terms of biological role, oxidase with broad substrate specificity, oxidizing aromatic azaheterocycles, such as phthalazine, as well as aldehydes, such as benzaldehyde and retinal. This chain is Aldehyde oxidase 2 (Aox2), found in Rattus norvegicus (Rat).